Here is a 234-residue protein sequence, read N- to C-terminus: Alpha N-terminal protein methyltransferase 1 (234 aa).

S-adenosyl-L-methionine-binding positions include Gly71, Arg76, 93-95, 120-121, and Gln136; these read DVV and LQ.

It belongs to the methyltransferase superfamily. NTM1 family. As to expression, expressed in uterine cells and PVT neurons of the tail. Expressed in pharynx, intestine and DVB tail neuron.

It carries out the reaction N-terminal L-alanyl-L-prolyl-L-lysyl-[protein] + 3 S-adenosyl-L-methionine = N-terminal N,N,N-trimethyl-L-alanyl-L-prolyl-L-lysyl-[protein] + 3 S-adenosyl-L-homocysteine + 3 H(+). The enzyme catalyses N-terminal L-seryl-L-prolyl-L-lysyl-[protein] + 3 S-adenosyl-L-methionine = N-terminal N,N,N-trimethyl-L-seryl-L-prolyl-L-lysyl-[protein] + 3 S-adenosyl-L-homocysteine + 3 H(+). It catalyses the reaction N-terminal L-prolyl-L-prolyl-L-lysyl-[protein] + 2 S-adenosyl-L-methionine = N-terminal N,N-dimethyl-L-prolyl-L-prolyl-L-lysyl-[protein] + 2 S-adenosyl-L-homocysteine + 2 H(+). Alpha-N-methyltransferase that methylates the N-terminus of target proteins containing the N-terminal motif [Ala/Pro/Ser]-Pro-Lys when the initiator Met is cleaved. Specifically catalyzes mono-, di- or tri-methylation of exposed alpha-amino group of Ala or Ser residue in the [Ala/Ser]-Pro-Lys motif and mono- or di-methylation of Pro in the Pro-Pro-Lys motif. Probably required for the synthesis of neurotransmitter melatonin from serotonin, which plays a role in promoting a sleep-like state, called lethargus, during larval development. The chain is Alpha N-terminal protein methyltransferase 1 from Caenorhabditis elegans.